Here is a 566-residue protein sequence, read N- to C-terminus: Serine/threonine-protein kinase PknE (566 aa).

At 1-337 (MDGTAESREG…PLPRSARQPW (337 aa)) the chain is on the cytoplasmic side. Position 7 is a phosphoserine; by autocatalysis (serine 7). Position 11 is a phosphothreonine; by autocatalysis (threonine 11). One can recognise a Protein kinase domain in the interval 16-275 (YRLRRLVGRG…DLSAAAHAAL (260 aa)). ATP contacts are provided by residues 22-30 (VGRGGMGDV) and lysine 45. Residues threonine 50 and threonine 59 each carry the phosphothreonine; by autocatalysis modification. Aspartate 139 functions as the Proton acceptor in the catalytic mechanism. 3 positions are modified to phosphothreonine; by autocatalysis: threonine 170, threonine 175, and threonine 178. Residues 296-330 (PVPSTHPVSPGTRWPQPTPWAGGAPPWGPPSSPLP) form a disordered region. The chain crosses the membrane as a helical span at residues 338–358 (LWVGVAVAVVVALAGGLGIAL). At 359-566 (AHPWRSSGPR…DPSWLARLIG (208 aa)) the chain is on the extracellular side.

This sequence belongs to the protein kinase superfamily. Ser/Thr protein kinase family. In terms of assembly, homodimer. Autophosphorylated on serine and threonine residues. Dephosphorylated by PstP.

It localises to the cell membrane. It carries out the reaction L-seryl-[protein] + ATP = O-phospho-L-seryl-[protein] + ADP + H(+). The enzyme catalyses L-threonyl-[protein] + ATP = O-phospho-L-threonyl-[protein] + ADP + H(+). Functionally, a serine/threonine-protein kinase, acts on HupB in vitro, modifying at least 2 Ser and 8 Thr residues. Important for bacterial survival in the host during infection. In Mycobacterium tuberculosis (strain ATCC 25177 / H37Ra), this protein is Serine/threonine-protein kinase PknE.